Consider the following 381-residue polypeptide: Guanine nucleotide-binding protein G(olf) subunit alpha (381 aa).

Residues 1–25 form a disordered region; that stretch reads MGCLGNSSKTAEDQGVDEKERREAN. Residue Gly-2 is the site of N-palmitoyl glycine attachment. Cys-3 carries the S-palmitoyl cysteine lipid modification. Residues 10 to 25 show a composition bias toward basic and acidic residues; that stretch reads TAEDQGVDEKERREAN. Residues 41 to 381 enclose the G-alpha domain; that stretch reads ATHRLLLLGA…RMHLKQYELL (341 aa). Residues 44-57 are G1 motif; it reads RLLLLGAGESGKST. Residues Glu-52, Ser-53, Gly-54, Lys-55, Ser-56, and Thr-57 each contribute to the GTP site. A Mg(2+)-binding site is contributed by Ser-56. Thr-178 bears the Phosphothreonine mark. A G2 motif region spans residues 183 to 191; sequence DLLRCRVLT. GTP contacts are provided by Leu-185, Arg-186, and Thr-191. Mg(2+)-binding residues include Thr-191 and Asp-210. A G3 motif region spans residues 206-215; that stretch reads FHMFDVGGQR. Residues Gly-213, Asn-279, Lys-280, Asp-282, and Ala-353 each coordinate GTP. The interval 275 to 282 is G4 motif; sequence ILFLNKQD. The G5 motif stretch occupies residues 351-356; it reads TCAVDT.

This sequence belongs to the G-alpha family. G(s) subfamily. In terms of assembly, g proteins are composed of 3 units; alpha, beta and gamma. The alpha chain contains the guanine nucleotide binding site. Interacts with GAS2L2. Interacts (GDP-bound form) with RIC8B (via C-terminus); promoting GNAL folding and association with the plasma membrane.

The protein localises to the cell membrane. The catalysed reaction is GTP + H2O = GDP + phosphate + H(+). Its function is as follows. Guanine nucleotide-binding protein (G protein) involved as transducer in olfactory signal transduction controlled by G protein-coupled receptors (GPCRs). Contains the guanine nucleotide binding site and alternates between an active, GTP-bound state and an inactive, GDP-bound state. Signaling by an activated GPCR promotes GDP release and GTP binding. The alpha subunit has a low GTPase activity that converts bound GTP to GDP, thereby terminating the signal. Both GDP release and GTP hydrolysis are modulated by numerous regulatory proteins. GNAL/G(olf) alpha specifically mediates olfactory signal transduction within the olfactory neuroepithelium and the basal ganglia following GPCRs activation. Acts by promoting the specific activation of adenylyl cyclase ADCY3, resulting in increased levels of the signaling molecule cAMP. The protein is Guanine nucleotide-binding protein G(olf) subunit alpha of Mus musculus (Mouse).